A 336-amino-acid polypeptide reads, in one-letter code: NADH-quinone oxidoreductase subunit H (336 aa).

Transmembrane regions (helical) follow at residues 12-32 (FLKI…LTWF), 84-104 (VVMA…GPGF), 118-138 (VNIA…GTIF), 156-176 (AAVV…VILL), 193-213 (GVWF…CMLA), 247-267 (LAEW…LFFG), 274-294 (IFGP…LVFF), and 313-333 (IAWK…AVVV).

It belongs to the complex I subunit 1 family. NDH-1 is composed of 14 different subunits. Subunits NuoA, H, J, K, L, M, N constitute the membrane sector of the complex.

Its subcellular location is the cell inner membrane. The catalysed reaction is a quinone + NADH + 5 H(+)(in) = a quinol + NAD(+) + 4 H(+)(out). Functionally, NDH-1 shuttles electrons from NADH, via FMN and iron-sulfur (Fe-S) centers, to quinones in the respiratory chain. The immediate electron acceptor for the enzyme in this species is believed to be ubiquinone. Couples the redox reaction to proton translocation (for every two electrons transferred, four hydrogen ions are translocated across the cytoplasmic membrane), and thus conserves the redox energy in a proton gradient. This subunit may bind ubiquinone. The protein is NADH-quinone oxidoreductase subunit H of Aquifex aeolicus (strain VF5).